A 192-amino-acid polypeptide reads, in one-letter code: MNAIWIAVAAVSLLGLAFGAILGYASRRFAVEDDPVVEKIDEILPQSQCGQCGYPGCRPYAETISCNGEKINRCAPGGEAVMLKIAELLNVEPQPLDGEAQELTPARMVAVIDENNCIGCTKCIQACPVDAIVGATRAMHTVMSDLCTGCNLCVDPCPTHCISLQPVAETPDSWKWDLNTIPVRIIPVEHHA.

The tract at residues 1 to 26 (MNAIWIAVAAVSLLGLAFGAILGYAS) is hydrophobic. The region spanning 32–91 (EDDPVVEKIDEILPQSQCGQCGYPGCRPYAETISCNGEKINRCAPGGEAVMLKIAELLNV) is the 4Fe-4S domain. [4Fe-4S] cluster-binding residues include Cys-49, Cys-52, Cys-57, Cys-74, Cys-117, Cys-120, Cys-123, Cys-127, Cys-147, Cys-150, Cys-153, and Cys-157. 2 consecutive 4Fe-4S ferredoxin-type domains span residues 108–137 (MVAV…GATR) and 138–167 (AMHT…LQPV).

It belongs to the 4Fe4S bacterial-type ferredoxin family. RnfB subfamily. As to quaternary structure, the complex is composed of six subunits: RsxA, RsxB, RsxC, RsxD, RsxE and RsxG. Requires [4Fe-4S] cluster as cofactor.

Its subcellular location is the cell inner membrane. In terms of biological role, part of a membrane-bound complex that couples electron transfer with translocation of ions across the membrane. Required to maintain the reduced state of SoxR. This Escherichia coli O6:K15:H31 (strain 536 / UPEC) protein is Ion-translocating oxidoreductase complex subunit B.